The chain runs to 202 residues: dITP/XTP pyrophosphatase (202 aa).

7 to 12 contacts substrate; the sequence is SNNPGK. Mg(2+)-binding residues include glutamate 39 and aspartate 68. Aspartate 68 serves as the catalytic Proton acceptor. Substrate is bound by residues alanine 69, 157-160, lysine 180, and 185-186; these read FGFD and HR.

This sequence belongs to the HAM1 NTPase family. Homodimer. It depends on Mg(2+) as a cofactor.

It catalyses the reaction XTP + H2O = XMP + diphosphate + H(+). The enzyme catalyses dITP + H2O = dIMP + diphosphate + H(+). The catalysed reaction is ITP + H2O = IMP + diphosphate + H(+). Its function is as follows. Pyrophosphatase that catalyzes the hydrolysis of nucleoside triphosphates to their monophosphate derivatives, with a high preference for the non-canonical purine nucleotides XTP (xanthosine triphosphate), dITP (deoxyinosine triphosphate) and ITP. Seems to function as a house-cleaning enzyme that removes non-canonical purine nucleotides from the nucleotide pool, thus preventing their incorporation into DNA/RNA and avoiding chromosomal lesions. This is dITP/XTP pyrophosphatase from Polaromonas naphthalenivorans (strain CJ2).